The chain runs to 456 residues: O-phospho-L-seryl-tRNA:Cys-tRNA synthase 2 (456 aa).

Pyridoxal 5'-phosphate contacts are provided by residues 146 to 147, Asn251, and 274 to 276; these read AR and SGH. Position 277 is an N6-(pyridoxal phosphate)lysine (Lys277).

The protein belongs to the SepCysS family. Homodimer. Interacts with SepRS. Pyridoxal 5'-phosphate is required as a cofactor.

The enzyme catalyses O-phospho-L-seryl-tRNA(Cys) + hydrogen sulfide + H(+) = L-cysteinyl-tRNA(Cys) + phosphate. In terms of biological role, converts O-phospho-L-seryl-tRNA(Cys) (Sep-tRNA(Cys)) to L-cysteinyl-tRNA(Cys) (Cys-tRNA(Cys)). This Methanospirillum hungatei JF-1 (strain ATCC 27890 / DSM 864 / NBRC 100397 / JF-1) protein is O-phospho-L-seryl-tRNA:Cys-tRNA synthase 2.